Consider the following 159-residue polypeptide: MSYPITSPSQFVFLSSVWADPIELLNVCTNSLGNQFQTQQARTTVQQQFSEVWEPFPQSTVRFPGDVYKVYRYNAVLDPLITALLGTFDTRNRIIEVENRQSPTTAETLDATRRVDDATVAIRSAINNLVNELVRGTGLYNQNTFESMSGLVWTSAPAS.

Belongs to the virgaviridae capsid protein family.

The protein resides in the virion. Functionally, capsid protein self-assembles to form rod-shaped virions about 18 nm in diameter with a central canal enclosing the viral genomic RNA. The polypeptide is Capsid protein (CP) (Tomato mosaic virus (strain Kazakh K1) (ToMV)).